The following is a 199-amino-acid chain: MASQSRRRRPLRRPETMVPGEAAETDSELSASSEEEELYLGPSGPTRGRPTGLRVAGEAAETDSDTEPEPKAAPRDLPPLVVQRETAGETWGEEETPAPAPALSLLQLRLAESQARLDHDVAAAVSGVYRRAGRDVAALAGRLAAAQAAGLAAAHSVRLARGDLCALAERLDIVAGCRLLPDIRGVPGTEPEQDPGPRA.

Residues 1–11 (MASQSRRRRPL) are compositionally biased toward basic residues. Positions 1 to 81 (MASQSRRRRP…AAPRDLPPLV (81 aa)) are disordered. The span at 23 to 38 (AETDSELSASSEEEEL) shows a compositional bias: acidic residues. Positions 39 to 54 (YLGPSGPTRGRPTGLR) are enriched in low complexity. Phosphothreonine is present on Thr-62. Ser-64 bears the Phosphoserine mark.

It belongs to the BLOC1S3 family. Component of the biogenesis of lysosome-related organelles complex 1 (BLOC-1) composed of BLOC1S1, BLOC1S2, BLOC1S3, BLOC1S4, BLOC1S5, BLOC1S6, DTNBP1/BLOC1S7 and SNAPIN/BLOC1S8. Octamer composed of one copy each BLOC1S1, BLOC1S2, BLOC1S3, BLOC1S4, BLOC1S5, BLOC1S6, DTNBP1/BLOC1S7 and SNAPIN/BLOC1S8. The BLOC-1 complex associates with the AP-3 protein complex and membrane protein cargos. Interacts directly with BLOC1S2. Interacts with BLOC1S4, BLOC1S5 and BLOC1S6. Post-translationally, phosphorylated.

It is found in the cytoplasm. Functionally, component of the BLOC-1 complex, a complex that is required for normal biogenesis of lysosome-related organelles (LRO), such as platelet dense granules and melanosomes. In concert with the AP-3 complex, the BLOC-1 complex is required to target membrane protein cargos into vesicles assembled at cell bodies for delivery into neurites and nerve terminals. The BLOC-1 complex, in association with SNARE proteins, is also proposed to be involved in neurite extension. Plays a role in intracellular vesicle trafficking. This Sus scrofa (Pig) protein is Biogenesis of lysosome-related organelles complex 1 subunit 3 (BLOC1S3).